Here is a 499-residue protein sequence, read N- to C-terminus: GTPase Der (499 aa).

The 164-residue stretch at 3–166 (PVIALVGRPN…QALGIFPKDN (164 aa)) folds into the EngA-type G 1 domain. GTP-binding positions include 9–16 (GRPNVGKS), 56–60 (DTGGI), and 118–121 (NKVD). Residues 166-199 (NADENAEGEEGGELAEGEEVVAEGQEPKRIPGPS) form a disordered region. Residues 168-186 (DENAEGEEGGELAEGEEVV) are compositionally biased toward acidic residues. Positions 190–199 (QEPKRIPGPS) are enriched in basic and acidic residues. The EngA-type G 2 domain maps to 204–377 (IKIAIIGRPN…SVQAAFKSAI (174 aa)). GTP is bound by residues 210-217 (GRPNVGKS), 257-261 (DTAGV), and 322-325 (NKWD). Positions 378-462 (TRWPTSRLTQ…PIRIEYKGGD (85 aa)) constitute a KH-like domain. Positions 459–472 (KGGDNPYEGKKNTL) are enriched in basic and acidic residues. The segment at 459–499 (KGGDNPYEGKKNTLTDRQVNKKRRLMSHHKKAEKKRRDKKR) is disordered. A compositionally biased stretch (basic residues) spans 478 to 499 (NKKRRLMSHHKKAEKKRRDKKR).

Belongs to the TRAFAC class TrmE-Era-EngA-EngB-Septin-like GTPase superfamily. EngA (Der) GTPase family. As to quaternary structure, associates with the 50S ribosomal subunit.

In terms of biological role, GTPase that plays an essential role in the late steps of ribosome biogenesis. The protein is GTPase Der of Stutzerimonas stutzeri (strain A1501) (Pseudomonas stutzeri).